The sequence spans 185 residues: Monooxygenase hypC (185 aa).

Transmembrane regions (helical) follow at residues 35-55, 75-95, and 106-126; these read TGTFLSGAMMSLFLLTIPVIL, GHIQGPLISIATGLLYSYAAY, and PFAVSAAVTVAMIPFTWVFMA. Residue Asn129 is glycosylated (N-linked (GlcNAc...) asparagine). The helical transmembrane segment at 165–185 threads the bilayer; sequence ALFPLSGAVLGLLSTCKIVSF.

Belongs to the anthrone oxygenase family.

It is found in the membrane. Its pathway is mycotoxin biosynthesis. Functionally, monooxygenase; part of the fragmented gene cluster that mediates the biosynthesis of dothistromin (DOTH), a polyketide toxin very similar in structure to the aflatoxin precursor, versicolorin B. The first step of the pathway is the conversion of acetate to norsolorinic acid (NOR) and requires the fatty acid synthase subunits hexA and hexB, as well as the polyketide synthase pksA. PksA combines a hexanoyl starter unit and 7 malonyl-CoA extender units to synthesize the precursor NOR. The hexanoyl starter unit is provided to the acyl-carrier protein (ACP) domain by the fungal fatty acid synthase hexA/hexB. The second step is the conversion of NOR to averantin (AVN) and requires the norsolorinic acid ketoreductase nor1, which catalyzes the dehydration of norsolorinic acid to form (1'S)-averantin. The cytochrome P450 monooxygenase avnA then catalyzes the hydroxylation of AVN to 5'hydroxyaverantin (HAVN). The next step is performed by adhA that transforms HAVN to averufin (AVF). Averufin might then be converted to hydroxyversicolorone by cypX and avfA. Hydroxyversicolorone is further converted versiconal hemiacetal acetate (VHA) by moxY. VHA is then the substrate for the versiconal hemiacetal acetate esterase est1 to yield versiconal (VAL). Versicolorin B synthase vbsA then converts VAL to versicolorin B (VERB) by closing the bisfuran ring. Then, the activity of the versicolorin B desaturase verB leads to versicolorin A (VERA). DotB, a predicted chloroperoxidase, may perform epoxidation of the A-ring of VERA. Alternatively, a cytochrome P450, such as cypX or avnA could catalyze this step. It is also possible that another, uncharacterized, cytochrome P450 enzyme is responsible for this step. Opening of the epoxide could potentially be achieved by the epoxide hydrolase epoA. However, epoA seems not to be required for DOTH biosynthesis, but other epoxide hydrolases may have the ability to complement this hydrolysis. Alternatively, opening of the epoxide ring could be achieved non-enzymatically. The next step is the deoxygenation of ring A to yield the 5,8-dihydroxyanthraquinone which is most likely catalyzed by the NADPH dehydrogenase encoded by ver1. The last stages of DOTH biosynthesis are proposed to involve hydroxylation of the bisfuran. OrdB and norB might have oxidative roles here. An alternative possibility is that cytochrome P450 monoogenases such as avnA and cypX might perform these steps in addition to previously proposed steps. The polypeptide is Monooxygenase hypC (Dothistroma septosporum (strain NZE10 / CBS 128990) (Red band needle blight fungus)).